A 539-amino-acid polypeptide reads, in one-letter code: Monocarboxylate transporter 8 (539 aa).

A disordered region spans residues 1–92 (MALQSQASEE…VETRGTARGF (92 aa)). Residue Ala2 is modified to N-acetylalanine. Topologically, residues 2 to 96 (ALQSQASEEA…GTARGFQPPE (95 aa)) are cytoplasmic. A compositionally biased stretch (acidic residues) spans 31-41 (PESEPEPEPEP). Positions 42–64 (EPVPVPPPEPQPEPQPLPDPAPL) are enriched in pro residues. Residues 97–117 (GGFGWVVVFAATWCNGSIFGI) traverse the membrane as a helical segment. Topologically, residues 118-143 (HNSVGILYSMLLEEEKEKNRQVEFQA) are extracellular. The helical transmembrane segment at 144-164 (AWVGALAMGMIFFCSPIVSIF) threads the bilayer. Topologically, residues 165-171 (TDRLGCR) are cytoplasmic. Residues 172–192 (ITATAGAAVAFIGLHTSSFTS) traverse the membrane as a helical segment. Residues 193–200 (SLSLRYFT) are Extracellular-facing. A helical transmembrane segment spans residues 201 to 221 (YGILFGCGCSFAFQPSLVILG). The Cytoplasmic portion of the chain corresponds to 222-229 (HYFQRRLG). A helical transmembrane segment spans residues 230-250 (LANGVVSAGSSIFSMSFPFLI). The Extracellular portion of the chain corresponds to 251 to 258 (RMLGDKIK). The helical transmembrane segment at 259–279 (LAQTFQVLSTFMFVLMLLSLT) threads the bilayer. The Cytoplasmic portion of the chain corresponds to 280 to 322 (YRPLLPSSQDTPSKRGVRTLHQRFLAQLRKYFNMRVFRQRTYR). Residues 323–343 (IWAFGIAAAALGYFVPYVHLM) form a helical membrane-spanning segment. The Extracellular portion of the chain corresponds to 344–356 (KYVEEEFSEIKET). Residues 357 to 377 (WVLLVCIGATSGLGRLVSGHI) form a helical membrane-spanning segment. Residues 378–386 (SDSIPGLKK) lie on the Cytoplasmic side of the membrane. Residues 387-407 (IYLQVLSFLLLGLMSMMIPLC) form a helical membrane-spanning segment. The Extracellular portion of the chain corresponds to 408–409 (RD). Residues 410 to 430 (FGGLIVVCLFLGLCDGFFITI) form a helical membrane-spanning segment. Residues 431 to 447 (MAPIAFELVGPMQASQA) lie on the Cytoplasmic side of the membrane. A helical membrane pass occupies residues 448 to 468 (IGYLLGMMALPMIAGPPIAGL). The Extracellular portion of the chain corresponds to 469-477 (LRNCFGDYH). Residues 478–498 (VAFYFAGVPPIIGAVILFFVP) form a helical membrane-spanning segment. Topologically, residues 499 to 539 (LMHQRMFKKEQRDSSKDKMLAPDPDPNGELLPGSPNPEEPI) are cytoplasmic. A compositionally biased stretch (basic and acidic residues) spans 508 to 518 (EQRDSSKDKML). Positions 508-539 (EQRDSSKDKMLAPDPDPNGELLPGSPNPEEPI) are disordered.

Belongs to the major facilitator superfamily. Monocarboxylate porter (TC 2.A.1.13) family. In terms of assembly, monomer. Homodimer. Homooligomer. Highly expressed in liver and heart. In adult brain tissue expression is largely confined to endothelial cells of the blood-brain barrier (at protein level).

It localises to the cell membrane. It is found in the apical cell membrane. The catalysed reaction is 3,3',5-triiodo-L-thyronine(out) = 3,3',5-triiodo-L-thyronine(in). The enzyme catalyses L-thyroxine(out) = L-thyroxine(in). It carries out the reaction 3,3',5'-triiodo-L-thyronine(out) = 3,3',5'-triiodo-L-thyronine(in). It catalyses the reaction 3,3'-diiodo-L-thyronine(out) = 3,3'-diiodo-L-thyronine(in). In terms of biological role, specific thyroid hormone transmembrane transporter, that mediates both uptake and efflux of thyroid hormones across the cell membrane independently of pH or a Na(+) gradient. Major substrates are the iodothyronines T3 and T4 and to a lesser extent rT3 and 3,3-diiodothyronine (3,3'-T2). Acts as an important mediator of thyroid hormone transport, especially T3, through the blood-brain barrier. The sequence is that of Monocarboxylate transporter 8 (SLC16A2) from Homo sapiens (Human).